The chain runs to 79 residues: MENLSMDLLYMAAAVMMGLAAIGAAIGIGILGGKFLEGAARQPDLIPLLRTQFFIVMGLVDAIPMIAVGLGLYVMFAVA.

2 helical membrane passes run 11–31 (MAAA…IGIL) and 53–73 (FFIV…LGLY).

Belongs to the ATPase C chain family. F-type ATPases have 2 components, F(1) - the catalytic core - and F(0) - the membrane proton channel. F(1) has five subunits: alpha(3), beta(3), gamma(1), delta(1), epsilon(1). F(0) has three main subunits: a(1), b(2) and c(10-14). The alpha and beta chains form an alternating ring which encloses part of the gamma chain. F(1) is attached to F(0) by a central stalk formed by the gamma and epsilon chains, while a peripheral stalk is formed by the delta and b chains.

The protein localises to the cell inner membrane. F(1)F(0) ATP synthase produces ATP from ADP in the presence of a proton or sodium gradient. F-type ATPases consist of two structural domains, F(1) containing the extramembraneous catalytic core and F(0) containing the membrane proton channel, linked together by a central stalk and a peripheral stalk. During catalysis, ATP synthesis in the catalytic domain of F(1) is coupled via a rotary mechanism of the central stalk subunits to proton translocation. Its function is as follows. Key component of the F(0) channel; it plays a direct role in translocation across the membrane. A homomeric c-ring of between 10-14 subunits forms the central stalk rotor element with the F(1) delta and epsilon subunits. The protein is ATP synthase subunit c of Serratia proteamaculans (strain 568).